We begin with the raw amino-acid sequence, 271 residues long: WUSCHEL-related homeobox 6 (271 aa).

A DNA-binding region (homeobox; WUS-type) is located at residues 57–121 (AATLRWNPTP…NHKARERLKR (65 aa)). Residues 118-195 (RLKRRRREGG…TEESDQRASE (78 aa)) form a disordered region. 2 stretches are compositionally biased toward basic and acidic residues: residues 132 to 148 (PHKD…RVDQ) and 180 to 195 (NEDH…RASE).

Belongs to the WUS homeobox family. As to expression, highly expressed in developing ovules. Present in developing primordia and differentiating organs but absent in mature organs.

Its subcellular location is the nucleus. In terms of biological role, transcription factor that plays a central role in ovule patterning by regulating cell proliferation of the maternal integuments and differentiation of the maegaspore mother cell (MCC). Involved in AGAMOUS (AG) repression in leaves. In Arabidopsis thaliana (Mouse-ear cress), this protein is WUSCHEL-related homeobox 6 (WOX6).